Reading from the N-terminus, the 255-residue chain is Antigen LPMC-61 (255 aa).

12 repeat units span residues 18-48, 49-57, 58-65, 66-78, 79-90, 91-103, 104-140, 141-152, 153-164, 165-172, 173-192, and 193-210. The interval 18-90 is disordered; that stretch reads WPERQQQQQP…QQQPQMQQEQ (73 aa). A 12 X approximate tandem repeats, Gln-rich region spans residues 18–210; the sequence is WPERQQQQQP…QQQQQQQQQQ (193 aa). A compositionally biased stretch (low complexity) spans 149–210; sequence QQQQWPEQPE…QQQQQQQQQQ (62 aa). The tract at residues 149–224 is disordered; sequence QQQQWPEQPE…DGVGIVVPYL (76 aa).

In terms of assembly, may be covalently linked by disulfide bonds to other polypeptides to form the 80 kDa antigen.

Unknown. The Gln-rich tandem repeats may be important for an unknown aspect of the parasitic life cycle. May be an important immunogen. This chain is Antigen LPMC-61, found in Eimeria tenella (Coccidian parasite).